A 54-amino-acid chain; its full sequence is Large ribosomal subunit protein bL32 (54 aa).

This sequence belongs to the bacterial ribosomal protein bL32 family.

The sequence is that of Large ribosomal subunit protein bL32 from Buchnera aphidicola subsp. Baizongia pistaciae (strain Bp).